The chain runs to 551 residues: Calcium-dependent protein kinase 19 (551 aa).

A lipid anchor (N-myristoyl glycine) is attached at Gly-2. The tract at residues 12–46 (VKKPTPDISGEQNTEVKSREITPKEQPRQRQPAPR) is disordered. A compositionally biased stretch (basic and acidic residues) spans 25–39 (TEVKSREITPKEQPR). A Protein kinase domain is found at 98–357 (YSLGRELGRG…AAQVLEHPWI (260 aa)). ATP-binding positions include 104–112 (LGRGQFGIT) and Lys-127. Asp-222 (proton acceptor) is an active-site residue. The residue at position 263 (Ser-263) is a Phosphoserine. Residues 363–393 (ASDKPIDSAVLSRMKQLRAMNKLKKLAFKFI) form an autoinhibitory domain region. EF-hand domains lie at 400 to 435 (EELK…LGSR), 436 to 471 (LTET…RFRV), 472 to 507 (ERED…YNMG), and 512 to 542 (IKEI…CSQS). Ca(2+)-binding residues include Asp-413, Asp-415, Ser-417, Thr-419, Glu-424, Asp-449, Asp-451, Asn-453, Thr-455, Glu-460, Asp-485, Asp-487, Ser-489, Glu-496, Asp-520, Asp-522, Asp-524, Ser-526, and Glu-531.

It belongs to the protein kinase superfamily. Ser/Thr protein kinase family. CDPK subfamily.

It localises to the membrane. The catalysed reaction is L-seryl-[protein] + ATP = O-phospho-L-seryl-[protein] + ADP + H(+). It catalyses the reaction L-threonyl-[protein] + ATP = O-phospho-L-threonyl-[protein] + ADP + H(+). Its activity is regulated as follows. Activated by calcium. Autophosphorylation may play an important role in the regulation of the kinase activity. May play a role in signal transduction pathways that involve calcium as a second messenger. The sequence is that of Calcium-dependent protein kinase 19 (CPK19) from Arabidopsis thaliana (Mouse-ear cress).